Consider the following 398-residue polypeptide: MNIHEYQGKEILNSFGVRIQRGTVARNAKEAVEAAKELTEKTGTGWHVIKAQVHAGGRGKGGGVKLAKNLKEVEEIAGEIIGMNLVTPQTSAEGKKVHQVLVTEDVYYPGDNEPEEYYMSVLLNRATGRNMIMYSTEGGMDIETVAEETPELIFTEEIDPATGLLGFQARRIAFNLGLSGKGFKEMTKFVMSLYEAFEKSDSSLFEINPVLKTSDDLIMAVDAKVTLDDNALFRHKDYAEMRDVREENATEVEAREVGLNYVDLDGNVGCMVNGAGLAMATMDLIKQAGGEPANFLDVGGTADAKRVEEAFRLILKDDKVEAILVNIFGGIVRCDRVAQGIVDASKNMGDAMNVPIIVRLQGTNADIAKELIDNSGLKVSSAIQFQEAADKVQEVLSK.

The ATP-grasp domain maps to 9–253 (KEILNSFGVR…VREENATEVE (245 aa)). Residues lysine 50, 57 to 59 (GRG), valine 106, and glutamate 116 each bind ATP. Mg(2+) contacts are provided by asparagine 208 and aspartate 222. Residues asparagine 273 and 330-332 (GIV) contribute to the substrate site.

It belongs to the succinate/malate CoA ligase beta subunit family. As to quaternary structure, heterotetramer of two alpha and two beta subunits. The cofactor is Mg(2+).

It carries out the reaction succinate + ATP + CoA = succinyl-CoA + ADP + phosphate. The enzyme catalyses GTP + succinate + CoA = succinyl-CoA + GDP + phosphate. Its pathway is carbohydrate metabolism; tricarboxylic acid cycle; succinate from succinyl-CoA (ligase route): step 1/1. Succinyl-CoA synthetase functions in the citric acid cycle (TCA), coupling the hydrolysis of succinyl-CoA to the synthesis of either ATP or GTP and thus represents the only step of substrate-level phosphorylation in the TCA. The beta subunit provides nucleotide specificity of the enzyme and binds the substrate succinate, while the binding sites for coenzyme A and phosphate are found in the alpha subunit. The polypeptide is Succinate--CoA ligase [ADP-forming] subunit beta (Christiangramia forsetii (strain DSM 17595 / CGMCC 1.15422 / KT0803) (Gramella forsetii)).